The chain runs to 464 residues: UDP-N-acetylmuramate--L-alanine ligase (464 aa).

112 to 118 (GTHGKTT) contacts ATP.

It belongs to the MurCDEF family.

The protein resides in the cytoplasm. It carries out the reaction UDP-N-acetyl-alpha-D-muramate + L-alanine + ATP = UDP-N-acetyl-alpha-D-muramoyl-L-alanine + ADP + phosphate + H(+). Its pathway is cell wall biogenesis; peptidoglycan biosynthesis. Its function is as follows. Cell wall formation. This is UDP-N-acetylmuramate--L-alanine ligase from Chromobacterium violaceum (strain ATCC 12472 / DSM 30191 / JCM 1249 / CCUG 213 / NBRC 12614 / NCIMB 9131 / NCTC 9757 / MK).